A 273-amino-acid polypeptide reads, in one-letter code: Vitamin B12-binding protein (273 aa).

The first 18 residues, 1–18 (MMKTLSSLLLLFSVSLQA), serve as a signal peptide directing secretion. In terms of domain architecture, Fe/B12 periplasmic-binding spans 23-273 (RVISLAPHAT…EHFASIEQKR (251 aa)). Cysteine 183 and cysteine 263 are joined by a disulfide.

The protein belongs to the BtuF family. As to quaternary structure, the complex is composed of two ATP-binding proteins (BtuD), two transmembrane proteins (BtuC) and a solute-binding protein (BtuF).

It localises to the periplasm. Functionally, part of the ABC transporter complex BtuCDF involved in vitamin B12 import. Binds vitamin B12 and delivers it to the periplasmic surface of BtuC. This chain is Vitamin B12-binding protein, found in Vibrio vulnificus (strain YJ016).